The chain runs to 158 residues: Cyclic pyranopterin monophosphate synthase (158 aa).

Substrate-binding positions include 75-77 and 113-114; these read LCH and ME. The active site involves D128.

It belongs to the MoaC family. Homohexamer; trimer of dimers.

The catalysed reaction is (8S)-3',8-cyclo-7,8-dihydroguanosine 5'-triphosphate = cyclic pyranopterin phosphate + diphosphate. The protein operates within cofactor biosynthesis; molybdopterin biosynthesis. In terms of biological role, catalyzes the conversion of (8S)-3',8-cyclo-7,8-dihydroguanosine 5'-triphosphate to cyclic pyranopterin monophosphate (cPMP). This is Cyclic pyranopterin monophosphate synthase from Pasteurella multocida (strain Pm70).